The primary structure comprises 251 residues: uncharacterized protein (251 aa).

This sequence belongs to the FAM243 family.

This is an uncharacterized protein from Homo sapiens (Human).